The sequence spans 255 residues: U2 small nuclear ribonucleoprotein A' (255 aa).

4 LRR repeats span residues 20–41, 43–64, 65–86, and 89–110; these read RDRE…GATL, QFDA…PLLR, RLKT…LDQA, and CLTE…DPLA. The region spanning 123 to 161 is the LRRCT domain; it reads NPVTNKKHYRLYVIYKVPQVRVLDFQKVKLKERQEAEKM. K172 bears the N6-acetyllysine; alternate mark. A Glycyl lysine isopeptide (Lys-Gly) (interchain with G-Cter in SUMO2); alternate cross-link involves residue K172. The segment at 174–201 is disordered; it reads IARRSKTFNPGAGLPTDKKKGGPSPGDV. S178 and S197 each carry phosphoserine. A Glycyl lysine isopeptide (Lys-Gly) (interchain with G-Cter in SUMO2) cross-link involves residue K221. The disordered stretch occupies residues 222-255; the sequence is GLLQSGQIPGRERRSGPTDDGEEEMEEDTVTNGS. Phosphoserine is present on residues S236 and S255. A compositionally biased stretch (acidic residues) spans 240-255; sequence DDGEEEMEEDTVTNGS.

This sequence belongs to the U2 small nuclear ribonucleoprotein A family. In terms of assembly, identified in the spliceosome B complex. Identified in the spliceosome C complex. Found in a pre-mRNA splicing complex with SFRS4, SFRS5, SNRNP70, SNRPA1, SRRM1 and SRRM2. Found in a pre-mRNA exonic splicing enhancer (ESE) complex with SNRNP70, SNRPA1, SRRM1 and TRA2B. Contributes to the binding of stem loop IV of U2 snRNA with SNRPB2.

The protein resides in the nucleus. In terms of biological role, involved in pre-mRNA splicing as component of the spliceosome. Associated with sn-RNP U2, where it contributes to the binding of stem loop IV of U2 snRNA. This chain is U2 small nuclear ribonucleoprotein A' (SNRPA1), found in Homo sapiens (Human).